Here is a 107-residue protein sequence, read N- to C-terminus: Metallothionein-1 (107 aa).

The propeptide occupies 1–2; the sequence is MD.

It belongs to the metallothionein superfamily. Type 7 family.

Functionally, the metallothioneins are involved in the cellular sequestration of toxic metal ions. Binds 12 cadmium ions per molecule. In Tetrahymena pigmentosa, this protein is Metallothionein-1.